A 541-amino-acid polypeptide reads, in one-letter code: 2-hydroxyacylsphingosine 1-beta-galactosyltransferase (541 aa).

A signal peptide spans 1 to 20 (MKSYTPYFILLWSAVGIAKA). 3 N-linked (GlcNAc...) asparagine glycosylation sites follow: Asn-78, Asn-333, and Asn-442. The helical transmembrane segment at 472-492 (YFLLDIAFVLLLGAALLYFLL) threads the bilayer.

The protein belongs to the UDP-glycosyltransferase family.

It is found in the membrane. The protein resides in the endoplasmic reticulum. The enzyme catalyses an N-acylsphing-4-enine + UDP-alpha-D-galactose = a beta-D-galactosyl-(1&lt;-&gt;1')-N-acylsphing-4-enine + UDP + H(+). It carries out the reaction an N-acyl-sphingoid base + UDP-alpha-D-galactose = a D-galactosylceramide + UDP + H(+). It catalyses the reaction N-(2-hydroxy-hexanoyl)-sphing-4-enine + UDP-alpha-D-galactose = N-(2-hydroxy-hexanoyl)-beta-D-galactosyl-sphing-4-enine + UDP + H(+). The catalysed reaction is N-(2-hydroxy-hexanoyl)-sphinganine + UDP-alpha-D-galactose = N-(2-hydroxyhexanoyl)-beta-D-galactosylsphinganine + UDP + H(+). The protein operates within sphingolipid metabolism; galactosylceramide biosynthesis. Catalyzes the transfer of galactose to ceramide, a key enzymatic step in the biosynthesis of galactocerebrosides, which are abundant sphingolipids of the myelin membrane of the central nervous system and peripheral nervous system. Galactosylates both hydroxy- and non-hydroxy fatty acid-containing ceramides and diglycerides. This chain is 2-hydroxyacylsphingosine 1-beta-galactosyltransferase, found in Homo sapiens (Human).